The following is a 445-amino-acid chain: 3-phosphoshikimate 1-carboxyvinyltransferase (445 aa).

Residues 1 to 25 (MTDSNQPTPLQARKSGALHGTARVP) form a disordered region. Positions 28, 29, and 33 each coordinate 3-phosphoshikimate. K28 serves as a coordination point for phosphoenolpyruvate. Phosphoenolpyruvate contacts are provided by G101 and R129. The 3-phosphoshikimate site is built by S175, Q177, D328, and K355. Q177 lines the phosphoenolpyruvate pocket. The active-site Proton acceptor is D328. Residues R359 and R402 each coordinate phosphoenolpyruvate.

It belongs to the EPSP synthase family. In terms of assembly, monomer.

Its subcellular location is the cytoplasm. It carries out the reaction 3-phosphoshikimate + phosphoenolpyruvate = 5-O-(1-carboxyvinyl)-3-phosphoshikimate + phosphate. It participates in metabolic intermediate biosynthesis; chorismate biosynthesis; chorismate from D-erythrose 4-phosphate and phosphoenolpyruvate: step 6/7. Its function is as follows. Catalyzes the transfer of the enolpyruvyl moiety of phosphoenolpyruvate (PEP) to the 5-hydroxyl of shikimate-3-phosphate (S3P) to produce enolpyruvyl shikimate-3-phosphate and inorganic phosphate. The protein is 3-phosphoshikimate 1-carboxyvinyltransferase of Rhodopseudomonas palustris (strain TIE-1).